A 463-amino-acid polypeptide reads, in one-letter code: Ataxin-10 homolog (463 aa).

This sequence belongs to the ataxin-10 family.

It is found in the cytoplasm. Its function is as follows. May play a role in the regulation of cytokinesis. The protein is Ataxin-10 homolog (CTR86) of Candida albicans (strain SC5314 / ATCC MYA-2876) (Yeast).